The sequence spans 71 residues: Small ribosomal subunit protein bS21 (71 aa).

Residues E39–Y71 form a disordered region. Positions R45–R59 are enriched in basic residues. Residues S60–Y71 show a composition bias toward basic and acidic residues.

Belongs to the bacterial ribosomal protein bS21 family.

The protein is Small ribosomal subunit protein bS21 of Stenotrophomonas maltophilia (strain K279a).